The primary structure comprises 458 residues: ATP synthase subunit beta (458 aa).

Gly-148–Thr-155 contacts ATP.

This sequence belongs to the ATPase alpha/beta chains family. As to quaternary structure, F-type ATPases have 2 components, CF(1) - the catalytic core - and CF(0) - the membrane proton channel. CF(1) has five subunits: alpha(3), beta(3), gamma(1), delta(1), epsilon(1). CF(0) has three main subunits: a(1), b(2) and c(9-12). The alpha and beta chains form an alternating ring which encloses part of the gamma chain. CF(1) is attached to CF(0) by a central stalk formed by the gamma and epsilon chains, while a peripheral stalk is formed by the delta and b chains.

It is found in the cell inner membrane. It carries out the reaction ATP + H2O + 4 H(+)(in) = ADP + phosphate + 5 H(+)(out). In terms of biological role, produces ATP from ADP in the presence of a proton gradient across the membrane. The catalytic sites are hosted primarily by the beta subunits. The chain is ATP synthase subunit beta from Legionella pneumophila (strain Paris).